We begin with the raw amino-acid sequence, 190 residues long: uncharacterized protein (190 aa).

4 consecutive transmembrane segments (helical) span residues 15-35 (LVMS…VLAI), 58-78 (FSSF…GVLI), 94-114 (FFSA…YFAF), and 148-168 (FLFF…SFFV).

Its subcellular location is the membrane. This is an uncharacterized protein from Saccharomyces cerevisiae (strain ATCC 204508 / S288c) (Baker's yeast).